Reading from the N-terminus, the 461-residue chain is mRNA cap guanine-N(7) methyltransferase (461 aa).

The interval 1 to 117 (MESSVKASVD…RKLQPQDALE (117 aa)) is disordered. A phosphoserine mark is found at serine 11, serine 15, serine 16, and serine 58. 2 stretches are compositionally biased toward polar residues: residues 14–29 (ESSPGVNETAAASGQR) and 49–58 (EQNSSYVQDS). Residues 65-93 (LDVEIILDEKHSEDDGGASKRSKLERGGG) are compositionally biased toward basic and acidic residues. Serine 94 and serine 99 each carry phosphoserine. A Nuclear localization signal motif is present at residues 107-109 (KRK). An mRNA cap 0 methyltransferase domain is found at 152–460 (SRIFYLRNFN…IYLVFAFEKQ (309 aa)). 161–162 (NN) is a binding site for mRNA. S-adenosyl-L-methionine is bound by residues lysine 165, glycine 190, aspartate 212, aspartate 246, glutamine 269, and tyrosine 274.

This sequence belongs to the class I-like SAM-binding methyltransferase superfamily. mRNA cap 0 methyltransferase family. As to quaternary structure, interacts with importin alpha, leading to stimulate both RNA-binding and methyltransferase activity. Interaction with importin alpha and beta is required for its nuclear localization, importin beta dissociating in response to RanGTP, allowing RNMT-importin alpha to bind RNA substrates. Interacts with elongating form of polymerase II and RNGTT. Interacts with RAMAC, this interaction significantly enhances RNA-binding and cap methyltransferase activity.

The protein resides in the nucleus. It carries out the reaction a 5'-end (5'-triphosphoguanosine)-ribonucleoside in mRNA + S-adenosyl-L-methionine = a 5'-end (N(7)-methyl 5'-triphosphoguanosine)-ribonucleoside in mRNA + S-adenosyl-L-homocysteine. Its activity is regulated as follows. Methyltransferase activity is activated by RAMAC. Catalytic subunit of the mRNA-capping methyltransferase RNMT:RAMAC complex that methylates the N7 position of the added guanosine to the 5'-cap structure of mRNAs. Binds RNA containing 5'-terminal GpppC. The sequence is that of mRNA cap guanine-N(7) methyltransferase (Rnmt) from Rattus norvegicus (Rat).